Reading from the N-terminus, the 411-residue chain is 2-acylphloroglucinol 4-prenyltransferase, chloroplastic (411 aa).

The N-terminal 91 residues, 1–91 (MELSSVSSFS…CNDQRGNSIR (91 aa)), are a transit peptide targeting the chloroplast. The next 8 helical transmembrane spans lie at 159 to 179 (LLGM…NQIF), 198 to 218 (ISVE…FILI), 226 to 246 (LLTS…VPPF), 253 to 273 (ITAF…VYYA), 278 to 298 (LGLA…ITFM), 333 to 353 (LLGT…AIIW), 356 to 376 (AFKS…LIFQ), and 391 to 411 (KSFY…YLFI).

Belongs to the UbiA prenyltransferase family. It depends on Mg(2+) as a cofactor. Expressed in glandular trichomes called lupulin glands, and in early stage and mature cones. Detected in leaves, but not in root, stem and first stage of flowers. No expression in male flowers.

It localises to the plastid. It is found in the chloroplast membrane. It catalyses the reaction a 2-acylphloroglucinol + dimethylallyl diphosphate = a 2-acyl-4-prenylphloroglucinol + diphosphate. It functions in the pathway secondary metabolite biosynthesis. In terms of biological role, involved in the biosynthesis of prenylated phenolics natural products which contribute to the bitter taste of beer and display broad biological activities. Catalyzes the first prenylation step in the beta-bitter acid pathway. Abble to transfer dimethylallyl diphosphate (DMAPP) or geranyl diphosphate (GPP) to phlorisovalerophenone (PIVP), phlorisobutrylphenone (PIMP) and naringenin chalcone. Can also use phlorisobutyrophenone (PIBP) and phlormethylbutanophenone (PMBP) as substrates, but not 6'-O-methylated chalcone or naringenin. In Humulus lupulus (European hop), this protein is 2-acylphloroglucinol 4-prenyltransferase, chloroplastic.